The chain runs to 678 residues: AAC-rich mRNA clone AAC4 protein (678 aa).

Low complexity predominate over residues 55–73; that stretch reads NNNNNNNNNNNNNNNNNNN. Residues 55 to 75 are disordered; it reads NNNNNNNNNNNNNNNNNNNTS. The chain crosses the membrane as a helical span at residues 243–263; it reads IIPIYHEIILVLCNWLVVAFY. Positions 318–346 are enriched in low complexity; sequence NNNNNNNNNNNNNNNNNNNNNNNNKTNNN. Positions 318–347 are disordered; that stretch reads NNNNNNNNNNNNNNNNNNNNNNNNKTNNNQ.

The protein resides in the membrane. The sequence is that of AAC-rich mRNA clone AAC4 protein (AAC4) from Dictyostelium discoideum (Social amoeba).